Here is a 792-residue protein sequence, read N- to C-terminus: Probable G-protein coupled receptor 156 (792 aa).

At 1-49 the chain is on the extracellular side; it reads MEPEINCSEFCDSFPGQELDRRPLHDLCKTTITDSQHGSADISPLSPAL. Asn6 carries N-linked (GlcNAc...) asparagine glycosylation. The chain crosses the membrane as a helical span at residues 50 to 70; that stretch reads LGVIWTFLSCGLLLVLFFLAF. Over 71 to 86 the chain is Cytoplasmic; the sequence is TIRCRKNRIVKMSSPN. Residues 87–107 form a helical membrane-spanning segment; that stretch reads LNIVTLLGSCLTYSSAYLFGI. Residues 108–118 lie on the Extracellular side of the membrane; sequence QDALVGSSVEA. Residues 119–139 form a helical membrane-spanning segment; sequence LIQTRLSLLCIGTTLVFGPIL. Topologically, residues 140-164 are cytoplasmic; the sequence is GKSWRLYKVFTQRVPDKRVIIKDLQ. The helical transmembrane segment at 165–185 threads the bilayer; the sequence is LLGLVAALVVADVILLVTWVL. Over 186–222 the chain is Extracellular; the sequence is TDPIQCLQILGVSMKVTGRDVSCSLTNTHFCASRYSD. Residues 223–243 form a helical membrane-spanning segment; the sequence is VWIALVLGCKGLLLLYGAYLA. Residues 244–257 are Cytoplasmic-facing; it reads GLTNHVSSPPVNQS. The helical transmembrane segment at 258–278 threads the bilayer; sequence LTIMVGVNLLLLTAGLLFVVT. Topologically, residues 279–287 are extracellular; that stretch reads RYLHSWPNL. A helical transmembrane segment spans residues 288–308; the sequence is VFGLTSGGIFVCTTTVNCCVF. Residues 309–792 lie on the Cytoplasmic side of the membrane; that stretch reads LPQLRQRKAF…FKDDLKPTLV (484 aa). Residues 354 to 390 are a coiled coil; sequence EXSCMERLLTEKNAVIESLQEQVSNAKEKLVKLMSAE. Disordered regions lie at residues 407 to 457, 469 to 516, and 538 to 704; these read GGPA…KYDM, GCSQ…EVLP, and DLGT…QRQP. The span at 422–434 shows a compositional bias: low complexity; the sequence is AAAEDSLPASAAS. Composition is skewed to basic and acidic residues over residues 443–457 and 474–486; these read SRRD…KYDM and PKAE…ERGN. The segment covering 554–567 has biased composition (polar residues); the sequence is PWKSNTSGSPQKLS. Residues 578–589 show a composition bias toward basic residues; that stretch reads VRRRRAAQRARS. Positions 602–619 are enriched in polar residues; sequence QANNTVSGSQNGLIVQNR. Basic and acidic residues predominate over residues 620-635; that stretch reads DSPRLDHHNARSKEPR. The segment covering 675-704 has biased composition (low complexity); it reads PRQPSASAPAQSSTAPCLSSXPALPRQRQP.

This sequence belongs to the G-protein coupled receptor 3 family. GABA-B receptor subfamily. Widely expressed throughout the brain and is particularly dense in the olfactory tubercles, islands of Calleja, nucleus accumbens, piriform cortex and all fields of the hippocampus.

It is found in the cell membrane. In terms of biological role, orphan G-protein coupled receptor involved in the regulation of hair cell orientation in mechanosensory organs of the inner ear. It is required to trigger a 180 degree reversal in hair cell orientation, creating a virtual line of polarity reversal (LPR) across which stereociliary bundles are arranged in opposite orientations. This Rattus norvegicus (Rat) protein is Probable G-protein coupled receptor 156 (Gpr156).